Consider the following 1256-residue polypeptide: Bifunctional autolysin (1256 aa).

Residues 1 to 29 (MAKKFNYKLPSMVALTLVGSAVTAHQVQA) form the signal peptide. Over residues 103 to 138 (GDTRANQSATTNNTQPVAKSTSTTAPKTNTNVTNAG) the composition is skewed to polar residues. Disordered stretches follow at residues 103–151 (GDTR…NSEN), 173–219 (AAAP…KYKP), and 419–440 (TQSTTTPTTPSKPTTPSKPSTG). Composition is skewed to low complexity over residues 173-196 (AAAPKAATTSAPKAKTEATPKVTT) and 421-439 (STTTPTTPSKPTTPSKPST). The N-acetylmuramoyl-L-alanine amidase stretch occupies residues 199 to 775 (ASAQPRSVAA…AVAQPKTAVK (577 aa)). GW domains lie at 443-517 (TVAA…YNTA), 519-593 (SPVN…DTAK), 612-686 (TVSS…YNNA), 688-762 (SPVN…VPAA), 784-859 (TTQT…VQNL), 861-936 (KEVK…APTA), and 943-1017 (AAKD…KELI). Positions 776–1256 (AYTVTKPQTT…GKYFDIPQYK (481 aa)) are endo-beta-N-acetylglucosaminidase.

It in the N-terminal section; belongs to the N-acetylmuramoyl-L-alanine amidase 2 family. In the C-terminal section; belongs to the glycosyl hydrolase 73 family. In terms of assembly, oligomer; forms a ring structure at the cell surface which is important for efficient partitioning of daughter cells after cell division. In terms of processing, undergoes proteolytic processing to generate the two extracellular lytic enzymes, probably at the septal region on the cell surface.

The protein resides in the secreted. The enzyme catalyses Hydrolyzes the link between N-acetylmuramoyl residues and L-amino acid residues in certain cell-wall glycopeptides.. It carries out the reaction an N(4)-(oligosaccharide-(1-&gt;3)-[oligosaccharide-(1-&gt;6)]-beta-D-Man-(1-&gt;4)-beta-D-GlcNAc-(1-&gt;4)-alpha-D-GlcNAc)-L-asparaginyl-[protein] + H2O = an oligosaccharide-(1-&gt;3)-[oligosaccharide-(1-&gt;6)]-beta-D-Man-(1-&gt;4)-D-GlcNAc + N(4)-(N-acetyl-beta-D-glucosaminyl)-L-asparaginyl-[protein]. In terms of biological role, endohydrolysis of the di-N-acetylchitobiosyl unit in high-mannose glycopeptides and glycoproteins containing the -[(Man)5(GlcNAc)2]-Asn structure. One N-acetyl-D-glucosamine residue remains attached to the protein; the rest of the oligosaccharide is released intact. Cleaves the peptidoglycan connecting the daughter cells at the end of the cell division cycle, resulting in the separation of the two newly divided cells. Acts as an autolysin in penicillin-induced lysis. This Staphylococcus aureus (strain MW2) protein is Bifunctional autolysin (atl).